The sequence spans 332 residues: Melanocortin receptor 4 (332 aa).

Residues 1–43 lie on the Extracellular side of the membrane; the sequence is MNSTHHHGMHTSLHFWNRSTYGLHSNASEPLGKGYSEGGCYEQ. Residues N2, N17, and N26 are each glycosylated (N-linked (GlcNAc...) asparagine). Cystine bridges form between C40/C279 and C271/C277. Residues 44-69 traverse the membrane as a helical segment; sequence LFVSPEVFVTLGVISLLENILVIVAI. The Cytoplasmic portion of the chain corresponds to 70-81; it reads AKNKNLHSPMYF. A helical transmembrane segment spans residues 82 to 106; it reads FICSLAVADMLVSVSNGSETIVITL. The Ca(2+) site is built by E100, D122, and D126. The Extracellular segment spans residues 107-123; sequence LNSTDTDAQSFTVNIDN. The helical transmembrane segment at 124–145 threads the bilayer; that stretch reads VIDSVICSSLLASICSLLSIAV. Residues 146–165 are Cytoplasmic-facing; the sequence is DRYFTIFYALQYHNIMTVKR. The chain crosses the membrane as a helical span at residues 166-186; the sequence is VGIIISCIWAVCTVSGVLFII. At 187 to 191 the chain is on the extracellular side; the sequence is YSDSS. Residues 192–215 traverse the membrane as a helical segment; that stretch reads AVIICLITVFFTMLALMASLYVHM. Residues 216–248 lie on the Cytoplasmic side of the membrane; the sequence is FLMARLHIKRIAVLPGTGTIRQGANMKGAITLT. The helical transmembrane segment at 249–271 threads the bilayer; sequence ILIGVFVVCWAPFFLHLIFYISC. Topologically, residues 272–280 are extracellular; sequence PQNPYCVCF. Residues 281–304 form a helical membrane-spanning segment; that stretch reads MSHFNLYLILIMCNSIIDPLIYAL. Topologically, residues 305-332 are cytoplasmic; that stretch reads RSQELRKTFKEIICCYPLGGLCDLSSRY. The S-palmitoyl cysteine moiety is linked to residue C318.

The protein belongs to the G-protein coupled receptor 1 family. As to quaternary structure, homodimer; disulfide-linked, also forms higher order oligomers. Interacts with GNAS. Interacts with ATRNL1. Interacts with MGRN1; this interaction competes with GNAS-binding and thus inhibits agonist-induced cAMP production. Interacts with MRAP and MRAP2; these associated factors increase ligand-sensitivity and generation of cAMP.

It is found in the cell membrane. Its function is as follows. Hormone receptor that acts as a key component of the leptin-melanocortin pathway at the intersection of homeostatic maintenance of energetic state. Plays a role in regulating food intake: activation by a stimulating hormone such as anorexigenic alpha-melanocyte stimulating hormone (alpha-MSH) inhibits appetite, whereas binding to a natural antagonist like Agouti-related protein/AGRP promotes appetite. G-protein-coupled receptor that activates conventional Galphas signaling leading to induction of anorexogenic signaling in the hypothalamus to result in negative energy balance. Regulates the firing activity of neurons from the hypothalamus by alpha-MSH and AGRP independently of Galphas signaling by ligand-induced coupling of closure of inwardly rectifying potassium channel KCNJ13. In intestinal epithelial cells, plays a role in the inhibition of hepatic glucose production via nesfatin-1/NUCB2 leading to increased cyclic adenosine monophosphate (cAMP) levels and glucagon-like peptide 1 (GLP-1) secretion in the intestinal epithelium. This Sus scrofa (Pig) protein is Melanocortin receptor 4 (MC4R).